Consider the following 153-residue polypeptide: Transcriptional repressor NrdR 2 (153 aa).

The segment at 3–34 is a zinc-finger region; the sequence is CPFCGQDDTQVKDSRPTDDNAAIRRRRACPGC. The ATP-cone domain occupies 49 to 139; the sequence is LVVVKKDGSR…VYRNFREAKD (91 aa).

It belongs to the NrdR family. It depends on Zn(2+) as a cofactor.

In terms of biological role, negatively regulates transcription of bacterial ribonucleotide reductase nrd genes and operons by binding to NrdR-boxes. In Paramagnetospirillum magneticum (strain ATCC 700264 / AMB-1) (Magnetospirillum magneticum), this protein is Transcriptional repressor NrdR 2.